A 955-amino-acid polypeptide reads, in one-letter code: Glycine dehydrogenase (decarboxylating) (955 aa).

Position 705 is an N6-(pyridoxal phosphate)lysine (K705).

Belongs to the GcvP family. In terms of assembly, the glycine cleavage system is composed of four proteins: P, T, L and H. It depends on pyridoxal 5'-phosphate as a cofactor.

The enzyme catalyses N(6)-[(R)-lipoyl]-L-lysyl-[glycine-cleavage complex H protein] + glycine + H(+) = N(6)-[(R)-S(8)-aminomethyldihydrolipoyl]-L-lysyl-[glycine-cleavage complex H protein] + CO2. Functionally, the glycine cleavage system catalyzes the degradation of glycine. The P protein binds the alpha-amino group of glycine through its pyridoxal phosphate cofactor; CO(2) is released and the remaining methylamine moiety is then transferred to the lipoamide cofactor of the H protein. The chain is Glycine dehydrogenase (decarboxylating) from Aliivibrio fischeri (strain MJ11) (Vibrio fischeri).